A 135-amino-acid polypeptide reads, in one-letter code: Small ribosomal subunit protein uS12 (135 aa).

Asp-89 carries the 3-methylthioaspartic acid modification. A disordered region spans residues 101-135 (SLDTSGVADRKQSRSKYGAKQPKAGAAAPVKGKRR). Over residues 116–135 (KYGAKQPKAGAAAPVKGKRR) the composition is skewed to low complexity.

It belongs to the universal ribosomal protein uS12 family. In terms of assembly, part of the 30S ribosomal subunit. Contacts proteins S8 and S17. May interact with IF1 in the 30S initiation complex.

Functionally, with S4 and S5 plays an important role in translational accuracy. In terms of biological role, interacts with and stabilizes bases of the 16S rRNA that are involved in tRNA selection in the A site and with the mRNA backbone. Located at the interface of the 30S and 50S subunits, it traverses the body of the 30S subunit contacting proteins on the other side and probably holding the rRNA structure together. The combined cluster of proteins S8, S12 and S17 appears to hold together the shoulder and platform of the 30S subunit. This chain is Small ribosomal subunit protein uS12, found in Chlorobium phaeobacteroides (strain DSM 266 / SMG 266 / 2430).